Here is a 385-residue protein sequence, read N- to C-terminus: MTDEIGIVTPQKLHVSTPLEMVSGSTLPEYDLAYETYGSLNADKSNAILICHALSGNHHVAGQYEGESTRGWWDGYIGPGKPIDTNRFFVVCSNNLGGCHGSTGPASINPLTGKVYGPDFPIVTCKDWVHSQNTLRQHLEIDAWAAVIGGSMGGMQVLQWTIDFPDQIRHAIVIASAPKLSAQNIAFNEVARRAIMTDPDFHDGRFIEAGTTPKRGLALARMLGHLTYLSDDMMGSKFGRELREGKLNYNFDVEFQVESYLRYQGEKFATKQNFDANTYLLMTKALDYFDPAADFDDDLSKALSGATAKFLIISFTTDWRFSPERSHEIVKALLDNDADISYAEVNSQHGHDAFLLPNDHYEGVFRAYMKRIHAELNHTSLQEGE.

The region spanning 46-355 is the AB hydrolase-1 domain; the sequence is NAILICHALS…NSQHGHDAFL (310 aa). Serine 151 acts as the Nucleophile in catalysis. A substrate-binding site is contributed by arginine 221. Active-site residues include aspartate 318 and histidine 351. Position 352 (aspartate 352) interacts with substrate.

It belongs to the AB hydrolase superfamily. MetX family. Homodimer.

It is found in the cytoplasm. The enzyme catalyses L-homoserine + succinyl-CoA = O-succinyl-L-homoserine + CoA. It functions in the pathway amino-acid biosynthesis; L-methionine biosynthesis via de novo pathway; O-succinyl-L-homoserine from L-homoserine: step 1/1. In terms of biological role, transfers a succinyl group from succinyl-CoA to L-homoserine, forming succinyl-L-homoserine. The chain is Homoserine O-succinyltransferase from Hydrogenovibrio crunogenus (strain DSM 25203 / XCL-2) (Thiomicrospira crunogena).